A 250-amino-acid chain; its full sequence is MAEIVPLRVQLIAKTDFIAPPDIDWSTDADGGPALVEFAGRACYQSWSKPNPRTATNESYLRHVIEVGHLSVLEHASATFYITGISRSCTHELIRHRHFSYSQLSQRFVPEDDSNVVLPPAVEDDPELVALVRKATDASRAAYVELLEKLESTLADVPNAVLRRKQARQAARSVLPNATETRIVVTGNYRAWRHFIAMRASEHADVEIRRLAIACLRQLADLAPSIFGDFDIATLADGTEVAISPLVYEG.

The ThyX domain maps to 7–233 (LRVQLIAKTD…PSIFGDFDIA (227 aa)). Residues S71, 95-97 (RHR), and Q103 each bind FAD. DUMP-binding positions include 92–95 (ELIR), 103–107 (QLSQR), and R172. Positions 95 to 105 (RHRHFSYSQLS) match the ThyX motif motif. FAD is bound by residues 188-190 (NYR) and H194. R199 contributes to the dUMP binding site. Residue R199 is the Involved in ionization of N3 of dUMP, leading to its activation of the active site.

The protein belongs to the thymidylate synthase ThyX family. In terms of assembly, homotetramer. The cofactor is FAD.

It carries out the reaction dUMP + (6R)-5,10-methylene-5,6,7,8-tetrahydrofolate + NADPH + H(+) = dTMP + (6S)-5,6,7,8-tetrahydrofolate + NADP(+). It functions in the pathway pyrimidine metabolism; dTTP biosynthesis. Functionally, catalyzes the reductive methylation of 2'-deoxyuridine-5'-monophosphate (dUMP) to 2'-deoxythymidine-5'-monophosphate (dTMP) while utilizing 5,10-methylenetetrahydrofolate (mTHF) as the methyl donor, and NADPH and FADH(2) as the reductant. The sequence is that of Flavin-dependent thymidylate synthase from Mycobacteroides abscessus (strain ATCC 19977 / DSM 44196 / CCUG 20993 / CIP 104536 / JCM 13569 / NCTC 13031 / TMC 1543 / L948) (Mycobacterium abscessus).